Reading from the N-terminus, the 618-residue chain is Medium-chain acyl-CoA ligase ACSF2, mitochondrial (618 aa).

The N-terminal 44 residues, 1–44 (MRATAAYVGMLRLGRMCAGSPGVLGARAALSRSWQEARLQAVRF), are a transit peptide targeting the mitochondrion. An N6-acetyllysine modification is found at K182. K185 bears the N6-acetyllysine; alternate mark. The residue at position 185 (K185) is an N6-succinyllysine; alternate. 266–274 (TSGTTGSPK) lines the ATP pocket. K343 and K401 each carry N6-acetyllysine. Position 481 is an N6-succinyllysine (K481). D496 and R511 together coordinate ATP. K513 is subject to N6-acetyllysine. N6-acetyllysine; alternate is present on residues K547 and K573. 2 positions are modified to N6-succinyllysine; alternate: K547 and K573. K602 provides a ligand contact to ATP. K602 carries the N6-succinyllysine modification.

It belongs to the ATP-dependent AMP-binding enzyme family.

It localises to the mitochondrion. It catalyses the reaction a medium-chain fatty acid + ATP + CoA = a medium-chain fatty acyl-CoA + AMP + diphosphate. It carries out the reaction octanoate + ATP + CoA = octanoyl-CoA + AMP + diphosphate. Functionally, acyl-CoA synthases catalyze the initial reaction in fatty acid metabolism, by forming a thioester with CoA. Has some preference toward medium-chain substrates. Plays a role in adipocyte differentiation. This Macaca fascicularis (Crab-eating macaque) protein is Medium-chain acyl-CoA ligase ACSF2, mitochondrial.